Consider the following 503-residue polypeptide: Glutamate--tRNA ligase (503 aa).

The 'HIGH' region signature appears at 12 to 22 (PSPTGYLHVGG). The short motif at 259 to 263 (KLSKR) is the 'KMSKS' region element. Lys-262 lines the ATP pocket.

The protein belongs to the class-I aminoacyl-tRNA synthetase family. Glutamate--tRNA ligase type 1 subfamily. As to quaternary structure, monomer.

Its subcellular location is the cytoplasm. It carries out the reaction tRNA(Glu) + L-glutamate + ATP = L-glutamyl-tRNA(Glu) + AMP + diphosphate. Catalyzes the attachment of glutamate to tRNA(Glu) in a two-step reaction: glutamate is first activated by ATP to form Glu-AMP and then transferred to the acceptor end of tRNA(Glu). This Chloroherpeton thalassium (strain ATCC 35110 / GB-78) protein is Glutamate--tRNA ligase.